A 61-amino-acid chain; its full sequence is Photosystem II reaction center protein K (61 aa).

The propeptide occupies 1 to 24; it reads MINIVSLVCIYINSVPYSSIFFLD. A helical transmembrane segment spans residues 36–56; the sequence is IVDIMPVIPLFFFLLAFVWQA.

It belongs to the PsbK family. PSII is composed of 1 copy each of membrane proteins PsbA, PsbB, PsbC, PsbD, PsbE, PsbF, PsbH, PsbI, PsbJ, PsbK, PsbL, PsbM, PsbT, PsbX, PsbY, PsbZ, Psb30/Ycf12, at least 3 peripheral proteins of the oxygen-evolving complex and a large number of cofactors. It forms dimeric complexes.

The protein localises to the plastid. Its subcellular location is the chloroplast thylakoid membrane. In terms of biological role, one of the components of the core complex of photosystem II (PSII). PSII is a light-driven water:plastoquinone oxidoreductase that uses light energy to abstract electrons from H(2)O, generating O(2) and a proton gradient subsequently used for ATP formation. It consists of a core antenna complex that captures photons, and an electron transfer chain that converts photonic excitation into a charge separation. This chain is Photosystem II reaction center protein K, found in Lotus japonicus (Lotus corniculatus var. japonicus).